Consider the following 320-residue polypeptide: Putative sporulation hydrolase CotR (320 aa).

A PNPLA domain is found at 7-182 (MTFDGGGTLG…VATNPSTASI (176 aa)). The short motif at 11-16 (GGGTLG) is the GXGXXG element. Residues 42–46 (GNSIG) carry the GXSXG motif. S44 (nucleophile) is an active-site residue. The active-site Proton acceptor is the D169.

The protein resides in the spore coat. This is Putative sporulation hydrolase CotR (cotR) from Bacillus subtilis (strain 168).